We begin with the raw amino-acid sequence, 654 residues long: Mitochondrial-processing peptidase subunit alpha-1 (654 aa).

The interval 73-94 is disordered; sequence SSSSYKGNNNNNNKLSYTTSSN. A coiled-coil region spans residues 381–446; that stretch reads HKNHLKSQLQ…EQLELQQVKE (66 aa).

This sequence belongs to the peptidase M16 family. In terms of assembly, heterodimer of alpha and beta subunits, forming the mitochondrial processing protease (MPP) in which subunit alpha is involved in substrate recognition and binding and subunit beta is the catalytic subunit.

The protein localises to the mitochondrion matrix. In terms of biological role, substrate recognition and binding subunit of the essential mitochondrial processing protease (MPP), which cleaves the mitochondrial sequence off newly imported precursors proteins. This is Mitochondrial-processing peptidase subunit alpha-1 (mppA1) from Dictyostelium discoideum (Social amoeba).